The following is a 638-amino-acid chain: Cell division control protein 45 homolog (638 aa).

Positions Glu-151 to Glu-204 are disordered. Residues Ser-153–Asp-170 show a composition bias toward acidic residues. Positions Arg-190–Glu-204 are enriched in basic and acidic residues.

This sequence belongs to the CDC45 family. Interacts with sld3.

The protein localises to the nucleus. Functionally, required for initiation of chromosomal DNA replication. May have a role in regulating the MCM proteins nda1 and nda4. In Schizosaccharomyces pombe (strain 972 / ATCC 24843) (Fission yeast), this protein is Cell division control protein 45 homolog (sna41).